The primary structure comprises 359 residues: UPF0283 membrane protein Rleg2_1967 (359 aa).

The tract at residues 1 to 43 (MSKPPSDPPRRPPAAFTYEDEATERHDNGRQAERRRKPESFSE) is disordered. Positions 23–40 (TERHDNGRQAERRRKPES) are enriched in basic and acidic residues. Transmembrane regions (helical) follow at residues 77-97 (FGKI…GLWT) and 111-131 (LGYL…ALVI).

It belongs to the UPF0283 family.

The protein localises to the cell inner membrane. In Rhizobium leguminosarum bv. trifolii (strain WSM2304), this protein is UPF0283 membrane protein Rleg2_1967.